Reading from the N-terminus, the 115-residue chain is Large ribosomal subunit protein bL20 (115 aa).

This sequence belongs to the bacterial ribosomal protein bL20 family.

Functionally, binds directly to 23S ribosomal RNA and is necessary for the in vitro assembly process of the 50S ribosomal subunit. It is not involved in the protein synthesizing functions of that subunit. The sequence is that of Large ribosomal subunit protein bL20 from Chlorobium chlorochromatii (strain CaD3).